The chain runs to 281 residues: tRNA uridine(34) hydroxylase (281 aa).

Residues 121-214 (SQPDVLVIDT…YLEKTHNKSG (94 aa)) enclose the Rhodanese domain. C174 serves as the catalytic Cysteine persulfide intermediate.

The protein belongs to the TrhO family.

It catalyses the reaction uridine(34) in tRNA + AH2 + O2 = 5-hydroxyuridine(34) in tRNA + A + H2O. Functionally, catalyzes oxygen-dependent 5-hydroxyuridine (ho5U) modification at position 34 in tRNAs. The protein is tRNA uridine(34) hydroxylase of Wolbachia pipientis subsp. Culex pipiens (strain wPip).